Consider the following 419-residue polypeptide: Enolase (419 aa).

Glutamine 161 contacts (2R)-2-phosphoglycerate. The active-site Proton donor is glutamate 205. Mg(2+) is bound by residues aspartate 240, glutamate 283, and aspartate 309. (2R)-2-phosphoglycerate contacts are provided by lysine 334, arginine 363, serine 364, and lysine 385. Lysine 334 serves as the catalytic Proton acceptor.

It belongs to the enolase family. The cofactor is Mg(2+).

The protein resides in the cytoplasm. Its subcellular location is the secreted. It localises to the cell surface. It catalyses the reaction (2R)-2-phosphoglycerate = phosphoenolpyruvate + H2O. It participates in carbohydrate degradation; glycolysis; pyruvate from D-glyceraldehyde 3-phosphate: step 4/5. Functionally, catalyzes the reversible conversion of 2-phosphoglycerate (2-PG) into phosphoenolpyruvate (PEP). It is essential for the degradation of carbohydrates via glycolysis. The chain is Enolase from Saccharolobus islandicus (strain Y.G.57.14 / Yellowstone #1) (Sulfolobus islandicus).